The primary structure comprises 1007 residues: Protocadherin alpha-C2 (1007 aa).

A signal peptide spans 1-42 (MEQAGTRPAATEHPRLRRPMPWLLLLPLLLLLLLLLPGPAAS). 5 consecutive Cadherin domains span residues 43–148 (QLRY…SPRF), 149–257 (PRPN…SPAF), 258–365 (DQST…APEV), 374–469 (VPEN…PPSF), and 470–579 (LEDS…APHI). At 43–708 (QLRYSVPEEQ…RTYSEITLYL (666 aa)) the chain is on the extracellular side. Residues asparagine 280 and asparagine 436 are each glycosylated (N-linked (GlcNAc...) asparagine). Residues asparagine 586 and asparagine 657 are each glycosylated (N-linked (GlcNAc...) asparagine). The region spanning 594-691 (VPRTAPAGYL…DRVSKILPDT (98 aa)) is the Cadherin 6 domain. Residues 709–729 (IIALSTVSFIFLLTIIILSII) form a helical membrane-spanning segment. The Cytoplasmic segment spans residues 730 to 1007 (KCYRYTAYGT…GNSTTDNSDQ (278 aa)). PXXP repeat units lie at residues 856–859 (PRQP), 889–892 (PGGP), 930–933 (PGNP), and 948–951 (PGSP). Residues 856 to 951 (PRQPNPDWRY…PDKFIIPGSP (96 aa)) are 4 X 4 AA repeats of P-X-X-P. Residues 885–1007 (LRAGPGGPDQ…GNSTTDNSDQ (123 aa)) are disordered. Positions 966–980 (DKSDFITFGKKEETK) are enriched in basic and acidic residues.

The protein localises to the cell membrane. Its function is as follows. Potential calcium-dependent cell-adhesion protein. May be involved in the establishment and maintenance of specific neuronal connections in the brain. This is Protocadherin alpha-C2 (PCDHAC2) from Homo sapiens (Human).